A 608-amino-acid polypeptide reads, in one-letter code: Putative multicopper oxidase GMC1 (608 aa).

3 consecutive Plastocyanin-like domains span residues isoleucine 51–glutamate 163, leucine 243–arginine 374, and glutamate 421–proline 548. Cu cation-binding residues include histidine 100, histidine 102, histidine 145, and histidine 147. Residues histidine 452, histidine 455, histidine 457, histidine 530, cysteine 531, histidine 532, and histidine 536 each coordinate Cu cation.

The protein belongs to the multicopper oxidase family. Cu cation is required as a cofactor.

Its function is as follows. Could be an iron transport multicopper oxidase, which is required for Fe(2+) high affinity uptake. May be required to oxidize Fe(2+) and release it from the transporter. Essential component of copper-dependent iron transport. Involved in meiotic prophase and synaptonemal complex (SC) assembly. This Saccharomyces cerevisiae (strain ATCC 204508 / S288c) (Baker's yeast) protein is Putative multicopper oxidase GMC1 (GMC1).